Reading from the N-terminus, the 176-residue chain is Probable DNA-directed RNA polymerase subunit delta (176 aa).

The HTH HARE-type domain occupies Cys14 to Trp81. Residues Ile91–Leu176 form a disordered region. Positions Asp106–Leu176 are enriched in acidic residues.

Belongs to the RpoE family. RNAP is composed of a core of 2 alpha, a beta and a beta' subunits. The core is associated with a delta subunit and one of several sigma factors.

Participates in both the initiation and recycling phases of transcription. In the presence of the delta subunit, RNAP displays an increased specificity of transcription, a decreased affinity for nucleic acids, and an increased efficiency of RNA synthesis because of enhanced recycling. In Bacillus thuringiensis (strain Al Hakam), this protein is Probable DNA-directed RNA polymerase subunit delta.